The sequence spans 830 residues: Nucleolar complex-associated protein 3 (830 aa).

Disordered regions lie at residues 1-22 (MGKNRRKQKVIPPPLLPPDVAE), 67-86 (KYEEERSKRKTLQEEKGNGE), 112-169 (KSKL…EETP), 391-436 (GKPN…KIRD), and 802-830 (LQSEEKKPLKKQNNVVKKKLKNPKSKKQI). 2 coiled-coil regions span residues 61 to 81 (VMTVEDKYEEERSKRKTLQEE) and 111 to 156 (KKSK…HEKD). Residues 67–84 (KYEEERSKRKTLQEEKGN) are compositionally biased toward basic and acidic residues. Residues 118–129 (AETDEAEKDVLE) show a composition bias toward acidic residues. The span at 130-140 (DEHVLNKSQRR) shows a compositional bias: basic and acidic residues. The short motif at 138–145 (QRREKAKK) is the Nuclear localization signal 1 element. A compositionally biased stretch (basic residues) spans 141 to 150 (EKAKKSKREA). The segment covering 159–168 (DEILQEEEET) has biased composition (acidic residues). Basic and acidic residues predominate over residues 391–400 (GKPNKEDEHN). Positions 400 to 429 (NKKYKKNNKRKTQEEQNQVQENERKKSKKD) form a coiled coil. The Nuclear localization signal 2 signature appears at 408 to 415 (KRKTQEEQ). Positions 420 to 436 (ENERKKSKKDMMSKIRD) are enriched in basic and acidic residues. Residues 806 to 813 (EKKPLKKQ) carry the Nuclear localization signal 3 motif. Residues 817–830 (VKKKLKNPKSKKQI) show a composition bias toward basic residues.

This sequence belongs to the CBF/MAK21 family. In terms of assembly, component of nucleolar complexes. Interacts with RBL and NOC2 in both the nucleolus and nucleoplasm.

The protein localises to the nucleus. Its subcellular location is the nucleolus. The protein resides in the nucleoplasm. May be required for synthesis of 60S ribosomal subunits and the transport of pre-ribosomes from the nucleoplasm to the cytoplasm. Also required for initiation of DNA replication. The sequence is that of Nucleolar complex-associated protein 3 from Arabidopsis thaliana (Mouse-ear cress).